Consider the following 113-residue polypeptide: Ig kappa chain V-II region 17S29.1 (113 aa).

The tract at residues 1-23 (DIVMTQAVFSNPVTLGTSASISC) is framework-1. Cys-23 and Cys-93 are disulfide-bonded. A complementarity-determining-1 region spans residues 24–39 (RSSKSLLHSNGITYLY). Positions 40-54 (WYLQKPGQSPQLLLY) are framework-2. Residues 55–61 (QMSNLAS) are complementarity-determining-2. Positions 62 to 93 (GVPDRFSSSGSGTDFTLRISRVEAEDVGVYYC) are framework-3. Residues 94–102 (AHNLELPYT) form a complementarity-determining-3 region. A framework-4 region spans residues 103 to 112 (FGGGTKLEIK).

In terms of biological role, anti-streptococcal group A carbohydrate antibody. This is Ig kappa chain V-II region 17S29.1 from Mus musculus (Mouse).